The following is a 340-amino-acid chain: Delta(1)-pyrroline-2-carboxylate reductase 1 (340 aa).

Residue S50 is the Charge relay system of the active site. Catalysis depends on H51, which acts as the Proton donor. R55 is a substrate binding site. NADP(+) is bound at residue 123–127 (HFSAL). Substrate is bound at residue T163. 181–183 (DFA) serves as a coordination point for NADP(+). 189 to 190 (RG) serves as a coordination point for substrate. Catalysis depends on D191, which acts as the Charge relay system. NADP(+) is bound by residues 232 to 233 (HK) and 307 to 313 (RLPSQRR).

It belongs to the LDH2/MDH2 oxidoreductase family. As to quaternary structure, homodimer.

It catalyses the reaction L-proline + NAD(+) = 1-pyrroline-2-carboxylate + NADH + H(+). The catalysed reaction is L-proline + NADP(+) = 1-pyrroline-2-carboxylate + NADPH + H(+). Catalyzes the reduction of Delta(1)-pyrroline-2-carboxylate (Pyr2C) to L-proline, using NADPH as the electron donor. May be involved in a degradation pathway that converts trans-3-hydroxy-L-proline (t3LHyp) to L-proline. In Burkholderia ambifaria (strain ATCC BAA-244 / DSM 16087 / CCUG 44356 / LMG 19182 / AMMD) (Burkholderia cepacia (strain AMMD)), this protein is Delta(1)-pyrroline-2-carboxylate reductase 1.